We begin with the raw amino-acid sequence, 1460 residues long: Cilia- and flagella-associated protein 43 (1460 aa).

WD repeat units lie at residues 46–87 (EGRY…HLQC), 91–132 (VATV…RLVK), 184–221 (SKGH…MKNY), 303–342 (RRRS…AGHT), 428–468 (IFAC…DSAS), 529–569 (MRDH…MKLP), 589–628 (FGRG…IHYS), 911–951 (EIDP…VTEV), and 1129–1170 (NRRF…CRAV). Coiled-coil stretches lie at residues 1170 to 1214 (VVEA…AEEA) and 1399 to 1446 (LGEH…LREA).

It belongs to the CFAP43 family.

It is found in the cell projection. Its subcellular location is the cilium. The protein localises to the flagellum. The protein resides in the cytoplasm. It localises to the cytoskeleton. It is found in the flagellum axoneme. In terms of biological role, flagellar protein involved in flagellum axoneme organization and function. This is Cilia- and flagella-associated protein 43 from Trypanosoma brucei brucei (strain 927/4 GUTat10.1).